The sequence spans 948 residues: Coatomer subunit beta-2 (948 aa).

HEAT repeat units lie at residues 49-87 (ETIP…TDSK), 92-126 (PEMI…MKET), 127-164 (EIVE…LPHG), 274-311 (TAIR…TLHR), 312-349 (DIMV…HHNI), and 391-428 (EVAS…TNPK).

Oligomeric complex that consists of at least the alpha, beta, beta', gamma, delta, epsilon and zeta subunits.

The protein resides in the cytoplasm. The protein localises to the golgi apparatus membrane. It is found in the cytoplasmic vesicle. Its subcellular location is the COPI-coated vesicle membrane. The coatomer is a cytosolic protein complex that binds to dilysine motifs and reversibly associates with Golgi non-clathrin-coated vesicles, which further mediate biosynthetic protein transport from the ER, via the Golgi up to the trans Golgi network. Coatomer complex is required for budding from Golgi membranes, and is essential for the retrograde Golgi-to-ER transport of dilysine-tagged proteins. The polypeptide is Coatomer subunit beta-2 (Arabidopsis thaliana (Mouse-ear cress)).